The sequence spans 309 residues: 4-diphosphocytidyl-2-C-methyl-D-erythritol kinase (309 aa).

Residue Lys-28 is part of the active site. Residue 120 to 130 participates in ATP binding; that stretch reads PSQAGMGGGSS. Asp-162 is an active-site residue.

The protein belongs to the GHMP kinase family. IspE subfamily.

The catalysed reaction is 4-CDP-2-C-methyl-D-erythritol + ATP = 4-CDP-2-C-methyl-D-erythritol 2-phosphate + ADP + H(+). It participates in isoprenoid biosynthesis; isopentenyl diphosphate biosynthesis via DXP pathway; isopentenyl diphosphate from 1-deoxy-D-xylulose 5-phosphate: step 3/6. Functionally, catalyzes the phosphorylation of the position 2 hydroxy group of 4-diphosphocytidyl-2C-methyl-D-erythritol. The chain is 4-diphosphocytidyl-2-C-methyl-D-erythritol kinase from Polaromonas sp. (strain JS666 / ATCC BAA-500).